A 157-amino-acid polypeptide reads, in one-letter code: dCTP deaminase (157 aa).

DCTP contacts are provided by residues 79–84, D95, Q124, and Y138; that span reads RSSLAR.

It belongs to the dCTP deaminase family. In terms of assembly, homotrimer.

It carries out the reaction dCTP + H2O + H(+) = dUTP + NH4(+). It participates in pyrimidine metabolism; dUMP biosynthesis; dUMP from dCTP (dUTP route): step 1/2. Catalyzes the deamination of dCTP to dUTP. This chain is dCTP deaminase, found in Thermococcus gammatolerans (strain DSM 15229 / JCM 11827 / EJ3).